The primary structure comprises 148 residues: Large ribosomal subunit protein uL15 (148 aa).

Residues Met-1 to Glu-51 are disordered. A compositionally biased stretch (gly residues) spans Arg-21–Ser-31. Basic residues predominate over residues Arg-33–Tyr-44.

This sequence belongs to the universal ribosomal protein uL15 family. In terms of assembly, part of the 50S ribosomal subunit.

Binds to the 23S rRNA. The chain is Large ribosomal subunit protein uL15 from Parabacteroides distasonis (strain ATCC 8503 / DSM 20701 / CIP 104284 / JCM 5825 / NCTC 11152).